Here is a 318-residue protein sequence, read N- to C-terminus: 4-hydroxy-3-methylbut-2-enyl diphosphate reductase (318 aa).

Cysteine 12 lines the [4Fe-4S] cluster pocket. Residues histidine 41 and histidine 74 each coordinate (2E)-4-hydroxy-3-methylbut-2-enyl diphosphate. Histidine 41 and histidine 74 together coordinate dimethylallyl diphosphate. Residues histidine 41 and histidine 74 each coordinate isopentenyl diphosphate. [4Fe-4S] cluster is bound at residue cysteine 96. Histidine 124 serves as a coordination point for (2E)-4-hydroxy-3-methylbut-2-enyl diphosphate. Residue histidine 124 participates in dimethylallyl diphosphate binding. Histidine 124 contributes to the isopentenyl diphosphate binding site. Catalysis depends on glutamate 126, which acts as the Proton donor. Position 167 (threonine 167) interacts with (2E)-4-hydroxy-3-methylbut-2-enyl diphosphate. Cysteine 197 provides a ligand contact to [4Fe-4S] cluster. Positions 225, 226, 227, and 269 each coordinate (2E)-4-hydroxy-3-methylbut-2-enyl diphosphate. Residues serine 225, serine 226, asparagine 227, and serine 269 each coordinate dimethylallyl diphosphate. Isopentenyl diphosphate is bound by residues serine 225, serine 226, asparagine 227, and serine 269.

Belongs to the IspH family. The cofactor is [4Fe-4S] cluster.

The enzyme catalyses isopentenyl diphosphate + 2 oxidized [2Fe-2S]-[ferredoxin] + H2O = (2E)-4-hydroxy-3-methylbut-2-enyl diphosphate + 2 reduced [2Fe-2S]-[ferredoxin] + 2 H(+). It carries out the reaction dimethylallyl diphosphate + 2 oxidized [2Fe-2S]-[ferredoxin] + H2O = (2E)-4-hydroxy-3-methylbut-2-enyl diphosphate + 2 reduced [2Fe-2S]-[ferredoxin] + 2 H(+). The protein operates within isoprenoid biosynthesis; dimethylallyl diphosphate biosynthesis; dimethylallyl diphosphate from (2E)-4-hydroxy-3-methylbutenyl diphosphate: step 1/1. Its pathway is isoprenoid biosynthesis; isopentenyl diphosphate biosynthesis via DXP pathway; isopentenyl diphosphate from 1-deoxy-D-xylulose 5-phosphate: step 6/6. Catalyzes the conversion of 1-hydroxy-2-methyl-2-(E)-butenyl 4-diphosphate (HMBPP) into a mixture of isopentenyl diphosphate (IPP) and dimethylallyl diphosphate (DMAPP). Acts in the terminal step of the DOXP/MEP pathway for isoprenoid precursor biosynthesis. In Francisella tularensis subsp. holarctica (strain LVS), this protein is 4-hydroxy-3-methylbut-2-enyl diphosphate reductase.